Consider the following 252-residue polypeptide: MQGQAQQQAYDRGITIFSPDGRLYQVEYAREAVKRGTASIGVRTPEGVVLAADKRSRSPLMEPTSVEKIHKADDHIGIASAGHVADARQLIDFARRQSQVNRLRYGEPIGIETLTKEVTDHIQQYTQVGGARPFGVALLIGGVENGTPRLYETDPSGTPYEWKAVSIGADRGDHQEHLEENFRDDLTLDEGIELALEAIASTSDEGTAPDGVDVATVSAETERFVELSNDEIESYLEANDLLATEDDEQTEE.

M1 carries the N-acetylmethionine; alternate modification.

The protein belongs to the peptidase T1A family. In terms of assembly, the 20S proteasome core is composed of 14 alpha and 14 beta subunits that assemble into four stacked heptameric rings, resulting in a barrel-shaped structure. The two inner rings, each composed of seven catalytic beta subunits, are sandwiched by two outer rings, each composed of seven alpha subunits. H.volcanii produces at least 2 types of 20S proteasomes: an alpha1-beta proteasome and a proteasome containing all three subunits (alpha1, alpha2, and beta) that appears to be asymmetrical with homo-oligomeric alpha1 and alpha2 rings positioned on separate ends. The catalytic chamber with the active sites is on the inside of the barrel. Has probably a gated structure, the ends of the cylinder being occluded by the N-termini of the alpha-subunits. Is likely capped at one or both ends by the proteasome regulatory ATPase, PAN. Post-translationally, acetylated. The acetylated form at Met-1 was shown to be in 100-fold excess of the unacetylated form with the initiator methionine removed in whole cells and purified 20S proteasomes.

The protein resides in the cytoplasm. With respect to regulation, the formation of the proteasomal ATPase PAN-20S proteasome complex, via the docking of the C-termini of PAN into the intersubunit pockets in the alpha-rings, triggers opening of the gate for substrate entry. Interconversion between the open-gate and close-gate conformations leads to a dynamic regulation of the 20S proteasome proteolysis activity. In vitro, the chymotrypsin-like activity of the alpha1-beta proteasome is potently inhibited by carbobenzoxyl-leucinyl-leucinyl-leucinal-H (MG132) and significantly by N-acetyl-leucinyl-leucinyl-norleucinal-H (calpain inhibitor I). Functionally, component of the proteasome core, a large protease complex with broad specificity involved in protein degradation. The H.volcanii alpha1-beta proteasome is able to cleave oligopeptides after Phe, Tyr and Trp, poorly after Glu but not after Arg. Thus, displays chymotrypsin-like activity, low caspase-like activity but no trypsin-like activity. The polypeptide is Proteasome subunit alpha 1 (Haloferax volcanii (strain ATCC 29605 / DSM 3757 / JCM 8879 / NBRC 14742 / NCIMB 2012 / VKM B-1768 / DS2) (Halobacterium volcanii)).